A 160-amino-acid chain; its full sequence is Nucleotide-binding protein VV1636 (160 aa).

It belongs to the YajQ family.

In terms of biological role, nucleotide-binding protein. This Vibrio vulnificus (strain YJ016) protein is Nucleotide-binding protein VV1636.